The primary structure comprises 448 residues: Probable glycine dehydrogenase (decarboxylating) subunit 1 (448 aa).

Belongs to the GcvP family. N-terminal subunit subfamily. In terms of assembly, the glycine cleavage system is composed of four proteins: P, T, L and H. In this organism, the P 'protein' is a heterodimer of two subunits.

It carries out the reaction N(6)-[(R)-lipoyl]-L-lysyl-[glycine-cleavage complex H protein] + glycine + H(+) = N(6)-[(R)-S(8)-aminomethyldihydrolipoyl]-L-lysyl-[glycine-cleavage complex H protein] + CO2. In terms of biological role, the glycine cleavage system catalyzes the degradation of glycine. The P protein binds the alpha-amino group of glycine through its pyridoxal phosphate cofactor; CO(2) is released and the remaining methylamine moiety is then transferred to the lipoamide cofactor of the H protein. The protein is Probable glycine dehydrogenase (decarboxylating) subunit 1 of Staphylococcus aureus (strain USA300).